The chain runs to 426 residues: Serine--tRNA ligase (426 aa).

An L-serine-binding site is contributed by 231–233 (TSE). 262–264 (RSE) contributes to the ATP binding site. Glu285 provides a ligand contact to L-serine. 349 to 352 (EISS) is a binding site for ATP. Ser385 is an L-serine binding site.

Belongs to the class-II aminoacyl-tRNA synthetase family. Type-1 seryl-tRNA synthetase subfamily. Homodimer. The tRNA molecule binds across the dimer.

Its subcellular location is the cytoplasm. It catalyses the reaction tRNA(Ser) + L-serine + ATP = L-seryl-tRNA(Ser) + AMP + diphosphate + H(+). The enzyme catalyses tRNA(Sec) + L-serine + ATP = L-seryl-tRNA(Sec) + AMP + diphosphate + H(+). It functions in the pathway aminoacyl-tRNA biosynthesis; selenocysteinyl-tRNA(Sec) biosynthesis; L-seryl-tRNA(Sec) from L-serine and tRNA(Sec): step 1/1. Catalyzes the attachment of serine to tRNA(Ser). Is also able to aminoacylate tRNA(Sec) with serine, to form the misacylated tRNA L-seryl-tRNA(Sec), which will be further converted into selenocysteinyl-tRNA(Sec). In Legionella pneumophila (strain Corby), this protein is Serine--tRNA ligase.